A 370-amino-acid chain; its full sequence is Ubiquinone biosynthesis O-methyltransferase, mitochondrial (370 aa).

A mitochondrion-targeting transit peptide spans M1–Y86. S-adenosyl-L-methionine is bound at residue R125. Residues K144 and K150 each carry the N6-acetyllysine modification. The S-adenosyl-L-methionine site is built by G155 and D176. An N6-acetyllysine modification is found at K197. S223 provides a ligand contact to S-adenosyl-L-methionine. E224, E227, and H228 together coordinate Mg(2+).

It belongs to the class I-like SAM-binding methyltransferase superfamily. UbiG/COQ3 family. As to quaternary structure, component of a multi-subunit COQ enzyme complex, composed of at least COQ3, COQ4, COQ5, COQ6, COQ7 and COQ9. Mg(2+) is required as a cofactor.

The protein resides in the mitochondrion inner membrane. The catalysed reaction is 3,4-dihydroxy-5-(all-trans-decaprenyl)benzoate + S-adenosyl-L-methionine = 4-hydroxy-3-methoxy-5-(all-trans-decaprenyl)benzoate + S-adenosyl-L-homocysteine + H(+). It catalyses the reaction a 3-demethylubiquinone + S-adenosyl-L-methionine = a ubiquinone + S-adenosyl-L-homocysteine. It carries out the reaction 3-demethylubiquinol-10 + S-adenosyl-L-methionine = ubiquinol-10 + S-adenosyl-L-homocysteine + H(+). It functions in the pathway cofactor biosynthesis; ubiquinone biosynthesis. Its function is as follows. O-methyltransferase required for two non-consecutive steps during ubiquinone biosynthesis. Catalyzes the 2 O-methylation of 3,4-dihydroxy-5-(all-trans-decaprenyl)benzoic acid into 4-hydroxy-3-methoxy-5-(all-trans-decaprenyl)benzoic acid. Also catalyzes the last step of ubiquinone biosynthesis by mediating methylation of 3-demethylubiquinone into ubiquinone. Also able to mediate the methylation of 3-demethylubiquinol-10 into ubiquinol-10. This is Ubiquinone biosynthesis O-methyltransferase, mitochondrial from Bos taurus (Bovine).